Here is a 175-residue protein sequence, read N- to C-terminus: Phytochrome-interacting ankyrin-repeat protein 1 (175 aa).

ANK repeat units lie at residues 30-59 (RGWT…DVNA), 67-96 (KGMT…NMEA), and 102-131 (CGWT…FLPD).

As to quaternary structure, interacts with phytochrome A (PHYA), both in Pr and Pfr forms.

The protein resides in the cytoplasm. It localises to the nucleus. It is found in the mitochondrion. This Arabidopsis thaliana (Mouse-ear cress) protein is Phytochrome-interacting ankyrin-repeat protein 1.